A 372-amino-acid polypeptide reads, in one-letter code: Protein phosphatase Mn(2+)-dependent 1K (372 aa).

A mitochondrion-targeting transit peptide spans 1–29 (MSTAALITLVRSGGNQVRRRVLLSSRLLQ). Residues 34-55 (VTPTCHSSTSEPRCSRFDPDGS) are disordered. The critical for association with the BCKDH complex stretch occupies residues 46 to 61 (RCSRFDPDGSGSPATW). A PPM-type phosphatase domain is found at 94–346 (NVGCASQIGK…DNSTAVVVPF (253 aa)). Residues Asp-127 and Gly-128 each coordinate Mn(2+). A Phosphoserine modification is found at Ser-248. Mn(2+) contacts are provided by Asp-298 and Asp-337.

It belongs to the PP2C family. Monomer. Interacts with E1 and E2 components of the branched-chain alpha-ketoacid dehydrogenase (BCKDH) complex; this interaction requires colocalization in mitochondria. Interacts with BCKDHA but not with BCKDHB of the E1 component. Interacts with the 24-meric E2 core composed of DBT monomers with a 24:1 stoichiometry; the N-terminal region (residues 49-61) of PPM1K and C-terminal linker of the lipoyl domain of DBT (residues 145-160) are critical for this interaction, whereas the lipoyl prosthetic group is dispensable. Competes with BCKDK for binding to the E2 core; this interaction is modulated by branched-chain alpha-keto acids. At steady state, BCKDH holoenzyme preferentially binds BCKDK and BCKDHA is phosphorylated. In response to high levels of branched-chain alpha-keto acids, the inhibitory BCKDK is replaced by activating PPM1K leading to BCKDHA dephosphorylation and BCAA degradation. Mn(2+) serves as cofactor.

It is found in the mitochondrion matrix. It carries out the reaction O-phospho-L-seryl-[3-methyl-2-oxobutanoate dehydrogenase] + H2O = L-seryl-[3-methyl-2-oxobutanoate dehydrogenase] + phosphate. The enzyme catalyses O-phospho-L-seryl-[protein] + H2O = L-seryl-[protein] + phosphate. Its pathway is protein modification. With respect to regulation, up-regulated upon interaction with the 24-meric DBT/E2 core of the BCKDH complex. Inhibited by Mg(2+) and Ca(2+) ions likely by competing with Mn(2+) ions for binding to the same metal-binding sites. In terms of biological role, serine/threonine-protein phosphatase component of macronutrients metabolism. Forms a functional kinase and phosphatase pair with BCKDK, serving as a metabolic regulatory node that coordinates branched-chain amino acids (BCAAs) with glucose and lipid metabolism via two distinct phosphoprotein targets: mitochondrial BCKDHA subunit of the branched-chain alpha-ketoacid dehydrogenase (BCKDH) complex and cytosolic ACLY, a lipogenic enzyme of Krebs cycle. At high levels of branched-chain ketoacids, dephosphorylates and activates mitochondrial BCKDH complex, a multisubunit complex consisting of three multimeric components each involved in different steps of BCAA catabolism: E1 composed of BCKDHA and BCKDHB, E2 core composed of DBT monomers, and E3 composed of DLD monomers. Tightly associates with the E2 component of BCKDH complex and dephosphorylates BCKDHA on Ser-337. Regulates the reversible phosphorylation of ACLY in response to changes in cellular carbohydrate abundance such as occurs during fasting to feeding metabolic transition. At fasting state, appears to dephosphorylate ACLY on Ser-455 and inactivate it. Refeeding stimulates MLXIPL/ChREBP transcription factor, leading to increased BCKDK to PPM1K expression ratio, phosphorylation and activation of ACLY that ultimately results in the generation of malonyl-CoA and oxaloacetate immediate substrates of de novo lipogenesis and gluconeogenesis, respectively. Recognizes phosphosites having SxS or RxxS motifs and strictly depends on Mn(2+) ions for the phosphatase activity. Regulates Ca(2+)-induced opening of mitochondrial transition pore and apoptotic cell death. This chain is Protein phosphatase Mn(2+)-dependent 1K, found in Homo sapiens (Human).